The following is a 303-amino-acid chain: MSDIDQWIETLKNGENLKETDVKILCNKAKDILNNEDNVIRVEAPVTICGDIHGQFYDLMELFKVGGDVPETNYLFLGDFVDRGYNSVETFLLLLALKVRYPDQITLIRGNHESRQITQVYGFYDECLRKYSTLNVWKYCTEVFDYLALAAVVNDNIFCVHGGLSPYIKTIDEIRIINRKQEVPHEGVMCDLMWSDPDEIEGWSQSARGAGFVFGADVVKEFNRRNGISLICRAHQLAMEGFKLMFDNSLVTVWSAPNYCYRCGNVASILELDENLKKYYKLFEAAPTDRAQNSKKVIADYFL.

Residues D51, H53, D79, and N111 each coordinate Mn(2+). The active-site Proton donor is the H112. Mn(2+) contacts are provided by H161 and H235.

Belongs to the PPP phosphatase family. PP-4 (PP-X) subfamily. Mn(2+) serves as cofactor.

The enzyme catalyses O-phospho-L-seryl-[protein] + H2O = L-seryl-[protein] + phosphate. It carries out the reaction O-phospho-L-threonyl-[protein] + H2O = L-threonyl-[protein] + phosphate. The sequence is that of Serine/threonine-protein phosphatase PP-X homolog 1 (Ppx1) from Paramecium tetraurelia.